The chain runs to 484 residues: Cobyric acid synthase (484 aa).

The 188-residue stretch at 251–438 (ALKIAVPVLP…LHGLFCSDAY (188 aa)) folds into the GATase cobBQ-type domain. The Nucleophile role is filled by C333. Residue H430 is part of the active site.

Belongs to the CobB/CobQ family. CobQ subfamily.

Its pathway is cofactor biosynthesis; adenosylcobalamin biosynthesis. In terms of biological role, catalyzes amidations at positions B, D, E, and G on adenosylcobyrinic A,C-diamide. NH(2) groups are provided by glutamine, and one molecule of ATP is hydrogenolyzed for each amidation. In Rhizobium rhizogenes (strain K84 / ATCC BAA-868) (Agrobacterium radiobacter), this protein is Cobyric acid synthase.